Consider the following 35-residue polypeptide: Phospholipase A2 bitanarin (35 aa).

It belongs to the phospholipase A2 family. Group II subfamily. Monomer. It depends on Ca(2+) as a cofactor. In terms of processing, contains 14 disulfide bonds. Expressed by the venom gland.

It localises to the secreted. It carries out the reaction a 1,2-diacyl-sn-glycero-3-phosphocholine + H2O = a 1-acyl-sn-glycero-3-phosphocholine + a fatty acid + H(+). In terms of biological role, snake venom phospholipase A2 (PLA2) that is the first competitive blocker of nicotinic acetylcholine receptors (nAChRs). Competes with alpha-bungarotoxin for binding to nAChRs and acetylcholine binding proteins (AChBPs) and blocks acetylcholine-elicited current. PLA2 catalyzes the calcium-dependent hydrolysis of the 2-acyl groups in 3-sn-phosphoglycerides. The sequence is that of Phospholipase A2 bitanarin from Bitis arietans (African puff adder).